Reading from the N-terminus, the 275-residue chain is D-apionate oxidoisomerase (275 aa).

NAD(+)-binding positions include 11–13 (GKM), Glu32, and Asp68. His113 and Glu183 together coordinate Zn(2+).

Belongs to the ApnO family. Zn(2+) is required as a cofactor.

The enzyme catalyses D-apionate + NAD(+) = 3-oxoisoapionate + NADH + H(+). The protein operates within carbohydrate metabolism. Functionally, involved in catabolism of D-apiose. Catalyzes the conversion of D-apionate to 3-oxo-isoapionate. In Rhizobium rhizogenes (strain K84 / ATCC BAA-868) (Agrobacterium radiobacter), this protein is D-apionate oxidoisomerase.